The following is a 265-amino-acid chain: GTP cyclohydrolase FolE2 (265 aa).

Belongs to the GTP cyclohydrolase IV family.

The catalysed reaction is GTP + H2O = 7,8-dihydroneopterin 3'-triphosphate + formate + H(+). The protein operates within cofactor biosynthesis; 7,8-dihydroneopterin triphosphate biosynthesis; 7,8-dihydroneopterin triphosphate from GTP: step 1/1. Its function is as follows. Converts GTP to 7,8-dihydroneopterin triphosphate. This is GTP cyclohydrolase FolE2 from Bordetella avium (strain 197N).